A 279-amino-acid chain; its full sequence is Proto-oncogene FRAT1 (279 aa).

Disordered stretches follow at residues 1 to 24 and 56 to 76; these read MPCRREEEEEAGEEAEGEEEEEDS and AQHSPASPCGPPGAPLRAPGP. Acidic residues predominate over residues 7–24; it reads EEEEAGEEAEGEEEEEDS. The residue at position 88 (S88) is a Phosphoserine. 2 disordered regions span residues 136-200 and 228-279; these read GPSA…DDPH and RAKL…VPGS. The segment at 198–220 is involved in GSK-3 binding; that stretch reads DPHRLLQQLVLSGNLIKEAVRRL. A phosphoserine mark is found at S249 and S252.

It belongs to the GSK-3-binding protein family. Binds DVL1. Binds GSK-3 and prevent GSK-3-dependent phosphorylation. Post-translationally, phosphorylated.

The protein localises to the cytoplasm. Functionally, positively regulates the Wnt signaling pathway by stabilizing beta-catenin through the association with GSK-3. May play a role in tumor progression and collaborate with PIM1 and MYC in lymphomagenesis. This is Proto-oncogene FRAT1 (FRAT1) from Homo sapiens (Human).